Reading from the N-terminus, the 430-residue chain is Tol-Pal system protein TolB (430 aa).

The N-terminal stretch at 1–26 (MSLMTKLGLRTLVASCLIAVGGAANA) is a signal peptide.

This sequence belongs to the TolB family. As to quaternary structure, the Tol-Pal system is composed of five core proteins: the inner membrane proteins TolA, TolQ and TolR, the periplasmic protein TolB and the outer membrane protein Pal. They form a network linking the inner and outer membranes and the peptidoglycan layer.

The protein localises to the periplasm. Its function is as follows. Part of the Tol-Pal system, which plays a role in outer membrane invagination during cell division and is important for maintaining outer membrane integrity. In Paraburkholderia xenovorans (strain LB400), this protein is Tol-Pal system protein TolB.